We begin with the raw amino-acid sequence, 1503 residues long: Translocase of chloroplast 159, chloroplastic (1503 aa).

Over residues 1-24 (MDSKSVTPEPTNPFYASSGQSGKT) the composition is skewed to polar residues. A disordered region spans residues 1–210 (MDSKSVTPEP…GGKVDVDDKS (210 aa)). A helical membrane pass occupies residues 21–37 (SGKTYASVVAAAAAAAA). Ser-71 bears the Phosphoserine mark. 2 stretches are compositionally biased toward basic and acidic residues: residues 85 to 98 (KVSDEVDGSLKEDS) and 176 to 210 (SESKVKDVEEEDVGTKKDDEGESELGGKVDVDDKS). A phosphoserine mark is found at Ser-210, Ser-281, and Ser-288. Disordered stretches follow at residues 298–338 (KFTS…DVEK) and 429–464 (VHNKFDPIGQGEGGEVELESDKATEEGGGKLVSEGD). Over residues 447 to 456 (ESDKATEEGG) the composition is skewed to basic and acidic residues. Ser-448, Ser-461, Ser-589, Ser-609, Ser-630, Ser-632, and Ser-665 each carry phosphoserine. A disordered region spans residues 610–633 (FGGKEVDQEPSGEGVTRVDGSESE). A coiled-coil region spans residues 781–804 (EEEKQKLEKLQSLRVKFLRLLQRL). Positions 853-1087 (IFSLNILVLG…RPQEPLDHRK (235 aa)) constitute an AIG1-type G domain. A G1 region spans residues 862 to 869 (GKAGVGKS). Residues 865–870 (GVGKSA) and 884–889 (DAFGLS) each bind GTP. Residue Ser-869 participates in Mg(2+) binding. The tract at residues 884 to 887 (DAFG) is homodimerization. Positions 889 to 893 (STTSV) are G2. The tract at residues 909–912 (DTPG) is G3. The tract at residues 947 to 952 (RLDTQT) is homodimerization. Residues 981-984 (THAA) are G4. Residues His-982 and 1035-1036 (EN) contribute to the GTP site. Residues 1035–1037 (ENH) are G5. Positions 1175 to 1203 (DYRVKLLQKKQWREELKRMKEMKKNGKKL) form a coiled coil. Residues 1203 to 1222 (LGESEFGYPGEEDDPENGAP) are disordered.

This sequence belongs to the TRAFAC class TrmE-Era-EngA-EngB-Septin-like GTPase superfamily. AIG1/Toc34/Toc159-like paraseptin GTPase family. TOC159 subfamily. As to quaternary structure, homodimer and heterodimer with TOC33. Part of the TOC core complex that includes 1 protein for the specific recognition of transit peptides surrounded by a ring composed of four proteins forming translocation channels, and four to five GTP-binding proteins providing energy. This core complex can interact with components of the TIC complex to form a larger import complex. Chloroplastic protein precursor such as prSS (precursor of the RuBisCO small subunit) interacts with these complexes. The TOC complex contains a specific subset of polar lipids such as digalactosyldiacylglyceride (DGDG), phosphatidylcholine (PC) and phosphatidylglycerol (PG). Interacts with SP1. Requires Mg(2+) as cofactor. Post-translationally, phosphorylated by KOC1.

It localises to the plastid. Its subcellular location is the chloroplast outer membrane. The protein resides in the cytoplasm. GTPase involved in protein precursor import into chloroplasts. Seems to recognize chloroplast-destined precursor proteins and regulate their presentation to the translocation channel through GTP hydrolysis. Required for chloroplast biogenesis. Probably specialized in the import of nuclear encoded photosynthetic preproteins from the cytoplasm to the chloroplast. This Arabidopsis thaliana (Mouse-ear cress) protein is Translocase of chloroplast 159, chloroplastic.